We begin with the raw amino-acid sequence, 427 residues long: Beta-porphyranase D (427 aa).

The signal sequence occupies residues 1 to 19 (MILKQAILTLVLVNANLFA). A disordered region spans residues 23–45 (PKTYSSTDKETRQGPPKPPMGKR). One can recognise a GH16 domain in the interval 32–308 (ETRQGPPKPP…WVRAYRLVDV (277 aa)). Residues tryptophan 73, arginine 76, glutamate 168, glutamate 173, and glutamate 272 each contribute to the substrate site. Glutamate 168 acts as the Nucleophile in catalysis. Residue glutamate 173 is the Proton donor of the active site.

It belongs to the glycosyl hydrolase 16 family.

It is found in the periplasm. It carries out the reaction Hydrolysis of beta-D-galactopyranose-(1-&gt;4)-alpha-L-galactopyranose-6-sulfate linkages in porphyran.. In terms of biological role, cleaves the sulfated polysaccharide porphyran at the (1-&gt;4) linkages between beta-D-galactopyranose and alpha-L-galactopyranose-6-sulfate, forming mostly the disaccharide alpha-L-galactopyranose-6-sulfate-(1-&gt;3)-beta-D-galactose. The polypeptide is Beta-porphyranase D (porD) (Zobellia galactanivorans (strain DSM 12802 / CCUG 47099 / CIP 106680 / NCIMB 13871 / Dsij)).